Here is a 328-residue protein sequence, read N- to C-terminus: Carbonic anhydrase-related protein 11 (328 aa).

The first 22 residues, 1 to 22 (MGAAARLSAPRALVLWAALGAA), serve as a signal peptide directing secretion. Residues 33–303 (DWWSYKDNLQ…LAHRALRGNR (271 aa)) form the Alpha-carbonic anhydrase domain. 3 N-linked (GlcNAc...) asparagine glycosylation sites follow: asparagine 118, asparagine 170, and asparagine 260. Residues 300-328 (RGNRDPRHPERRCRGPNYRLHVDGAPHGR) form a disordered region. The span at 319-328 (LHVDGAPHGR) shows a compositional bias: basic and acidic residues.

It belongs to the alpha-carbonic anhydrase family.

It is found in the secreted. Functionally, does not have a catalytic activity. This Bos taurus (Bovine) protein is Carbonic anhydrase-related protein 11 (CA11).